Reading from the N-terminus, the 712-residue chain is Small ribosomal subunit protein uS3c (712 aa).

The interval 1 to 118 (MGQKVHPLGF…IKVSKDLVTN (118 aa)) is S3-like 1st part. An intervening sequence (IVS) region spans residues 119-580 (LQKTRKYLFK…LQTAFLTQIE (462 aa)). The tract at residues 581–712 (SQRKMYKANL…VWIFKGYSKI (132 aa)) is S3-like 2nd part.

This sequence belongs to the universal ribosomal protein uS3 family. Part of the 30S ribosomal subunit.

The protein localises to the plastid. Its subcellular location is the chloroplast. In Chlamydomonas reinhardtii (Chlamydomonas smithii), this protein is Small ribosomal subunit protein uS3c (rps3).